Reading from the N-terminus, the 239-residue chain is Phosphoribosylaminoimidazole-succinocarboxamide synthase (239 aa).

The protein belongs to the SAICAR synthetase family.

The catalysed reaction is 5-amino-1-(5-phospho-D-ribosyl)imidazole-4-carboxylate + L-aspartate + ATP = (2S)-2-[5-amino-1-(5-phospho-beta-D-ribosyl)imidazole-4-carboxamido]succinate + ADP + phosphate + 2 H(+). The protein operates within purine metabolism; IMP biosynthesis via de novo pathway; 5-amino-1-(5-phospho-D-ribosyl)imidazole-4-carboxamide from 5-amino-1-(5-phospho-D-ribosyl)imidazole-4-carboxylate: step 1/2. The chain is Phosphoribosylaminoimidazole-succinocarboxamide synthase from Bacillus mycoides (strain KBAB4) (Bacillus weihenstephanensis).